We begin with the raw amino-acid sequence, 398 residues long: Steroid C26-monooxygenase (398 aa).

Residue Cys340 participates in heme binding.

Belongs to the cytochrome P450 family. It depends on heme as a cofactor.

The enzyme catalyses cholest-4-en-3-one + 6 reduced [2Fe-2S]-[ferredoxin] + 3 O2 + 5 H(+) = (25R)-3-oxocholest-4-en-26-oate + 6 oxidized [2Fe-2S]-[ferredoxin] + 4 H2O. It carries out the reaction cholest-4-en-3-one + 2 reduced [2Fe-2S]-[ferredoxin] + O2 + 2 H(+) = (25R)-3-oxocholest-4-en-26-ol + 2 oxidized [2Fe-2S]-[ferredoxin] + H2O. The catalysed reaction is (25R)-3-oxocholest-4-en-26-ol + 2 reduced [2Fe-2S]-[ferredoxin] + O2 + 2 H(+) = (25R)-3-oxocholest-4-en-26-al + 2 oxidized [2Fe-2S]-[ferredoxin] + 2 H2O. It catalyses the reaction (25R)-3-oxocholest-4-en-26-al + 2 reduced [2Fe-2S]-[ferredoxin] + O2 + H(+) = (25R)-3-oxocholest-4-en-26-oate + 2 oxidized [2Fe-2S]-[ferredoxin] + H2O. The enzyme catalyses cholesterol + NADPH + O2 + H(+) = 26-hydroxycholesterol + NADP(+) + H2O. It carries out the reaction 26-hydroxycholesterol + 2 reduced [2Fe-2S]-[ferredoxin] + O2 + 2 H(+) = (3beta)-hydroxy-cholest-5-en-26-al + 2 oxidized [2Fe-2S]-[ferredoxin] + 2 H2O. The catalysed reaction is (3beta)-hydroxy-cholest-5-en-26-al + NADPH + O2 = (3beta)-hydroxy-cholest-5-en-26-oate + NADP(+) + H2O. It catalyses the reaction (25S)-3-oxocholest-4-en-26-ol + 2 reduced [2Fe-2S]-[ferredoxin] + O2 + 2 H(+) = (25S)-3-oxocholest-4-en-26-al + 2 oxidized [2Fe-2S]-[ferredoxin] + 2 H2O. The enzyme catalyses (25S)-3-oxocholest-4-en-26-al + 2 reduced [2Fe-2S]-[ferredoxin] + O2 + H(+) = (25S)-3-oxocholest-4-en-26-oate + 2 oxidized [2Fe-2S]-[ferredoxin] + H2O. It participates in steroid metabolism; cholesterol degradation. With respect to regulation, inhibited by econazole, clotrimazole and miconazole. Its function is as follows. Involved in the utilization of cholesterol as the sole carbon and energy source by degrading the side chain during infection. Primarily catalyzes the sequential oxidation of the terminal methyl of cholest-4-en-3-one into (25R)-26-hydroxycholest-4-en-3-one (alcohol), (25R)-26-oxocholest-4-en-3-one (aldehyde), to finally yield the carboxylic acid (25R)-3-oxocholest-4-en-26-oate. In vitro, Cyp142 catalyzes with equal preference the oxidation of both (25R)- and (25S)-26-hydroxycholest-4-en-3-one diastereomers to the corresponding carboxylic acid which is a prerequisite for entry into the beta-oxidation pathway. Also able to sequentially oxidize cholesterol itself, not only cholest-4-en-3-one. This chain is Steroid C26-monooxygenase (cyp142), found in Mycobacterium tuberculosis (strain ATCC 25618 / H37Rv).